We begin with the raw amino-acid sequence, 481 residues long: Argininosuccinate synthase (481 aa).

ATP is bound by residues 17–25 (AFSGGLDTS) and A43. Y99 serves as a coordination point for L-citrulline. Residues G129 and T131 each coordinate ATP. L-aspartate-binding residues include T131, N135, and D136. N135 contacts L-citrulline. ATP is bound at residue D136. L-citrulline-binding residues include R139 and S192. D194 provides a ligand contact to ATP. T201, E203, and E280 together coordinate L-citrulline.

The protein belongs to the argininosuccinate synthase family. Type 2 subfamily. In terms of assembly, homotetramer.

Its subcellular location is the cytoplasm. The enzyme catalyses L-citrulline + L-aspartate + ATP = 2-(N(omega)-L-arginino)succinate + AMP + diphosphate + H(+). It participates in amino-acid biosynthesis; L-arginine biosynthesis; L-arginine from L-ornithine and carbamoyl phosphate: step 2/3. The chain is Argininosuccinate synthase (argG) from Streptomyces coelicolor (strain ATCC BAA-471 / A3(2) / M145).